We begin with the raw amino-acid sequence, 100 residues long: uncharacterized protein (100 aa).

Residues 1-17 (MTMKYFCSVMIAIALVG) form the signal peptide. Cys18 carries the N-palmitoyl cysteine lipid modification. Cys18 is lipidated: S-diacylglycerol cysteine.

Its subcellular location is the cell membrane. This is an uncharacterized protein from Salmonella paratyphi A (strain ATCC 9150 / SARB42).